Consider the following 168-residue polypeptide: NADH-quinone oxidoreductase subunit I (168 aa).

4Fe-4S ferredoxin-type domains follow at residues 58–88 (LRRY…IEAG) and 99–128 (VRYD…EGPN). 8 residues coordinate [4Fe-4S] cluster: C68, C71, C74, C78, C108, C111, C114, and C118.

It belongs to the complex I 23 kDa subunit family. As to quaternary structure, NDH-1 is composed of 14 different subunits. Subunits NuoA, H, J, K, L, M, N constitute the membrane sector of the complex. It depends on [4Fe-4S] cluster as a cofactor.

It is found in the cell inner membrane. It carries out the reaction a quinone + NADH + 5 H(+)(in) = a quinol + NAD(+) + 4 H(+)(out). Its function is as follows. NDH-1 shuttles electrons from NADH, via FMN and iron-sulfur (Fe-S) centers, to quinones in the respiratory chain. The immediate electron acceptor for the enzyme in this species is believed to be ubiquinone. Couples the redox reaction to proton translocation (for every two electrons transferred, four hydrogen ions are translocated across the cytoplasmic membrane), and thus conserves the redox energy in a proton gradient. This Bradyrhizobium diazoefficiens (strain JCM 10833 / BCRC 13528 / IAM 13628 / NBRC 14792 / USDA 110) protein is NADH-quinone oxidoreductase subunit I.